A 389-amino-acid chain; its full sequence is Globin-like protein 6 (389 aa).

Polar residues predominate over residues 1–15 (MGNQSTKSTHGTTRV). Disordered regions lie at residues 1 to 38 (MGNQ…RSAS), 96 to 123 (RTSK…SVDS), and 143 to 185 (TVSS…SSNP). The segment covering 16-25 (SHSKSAHHNS) has biased composition (basic residues). The 152-residue stretch at 196 to 347 (HLTQPQILFV…VTEQLKEGFQ (152 aa)) folds into the Globin domain. Heme b-binding residues include H254 and H286. A disordered region spans residues 367 to 389 (SSFEISTKTKQSDMKRFHTLDNM). Over residues 376-389 (KQSDMKRFHTLDNM) the composition is skewed to basic and acidic residues.

The protein belongs to the globin family. In terms of tissue distribution, expressed in the head and tail neurons and nerve cord.

In terms of biological role, may play a role as physiological sensor for oxygen via redox signaling and/or electron transport. This Caenorhabditis elegans protein is Globin-like protein 6.